A 500-amino-acid chain; its full sequence is Glutamate--tRNA ligase (500 aa).

Positions 13-23 match the 'HIGH' region motif; that stretch reads PSPTGTPHVGM. The 'KMSKS' region signature appears at 258–262; sequence KLSKR. Residue Lys261 participates in ATP binding.

This sequence belongs to the class-I aminoacyl-tRNA synthetase family. Glutamate--tRNA ligase type 1 subfamily. As to quaternary structure, monomer.

It localises to the cytoplasm. It carries out the reaction tRNA(Glu) + L-glutamate + ATP = L-glutamyl-tRNA(Glu) + AMP + diphosphate. Its function is as follows. Catalyzes the attachment of glutamate to tRNA(Glu) in a two-step reaction: glutamate is first activated by ATP to form Glu-AMP and then transferred to the acceptor end of tRNA(Glu). The sequence is that of Glutamate--tRNA ligase from Corynebacterium jeikeium (strain K411).